Consider the following 240-residue polypeptide: Ubiquinone biosynthesis O-methyltransferase (240 aa).

S-adenosyl-L-methionine is bound by residues Arg44, Gly64, Asp85, and Met129.

It belongs to the methyltransferase superfamily. UbiG/COQ3 family.

It catalyses the reaction a 3-demethylubiquinol + S-adenosyl-L-methionine = a ubiquinol + S-adenosyl-L-homocysteine + H(+). The enzyme catalyses a 3-(all-trans-polyprenyl)benzene-1,2-diol + S-adenosyl-L-methionine = a 2-methoxy-6-(all-trans-polyprenyl)phenol + S-adenosyl-L-homocysteine + H(+). It participates in cofactor biosynthesis; ubiquinone biosynthesis. O-methyltransferase that catalyzes the 2 O-methylation steps in the ubiquinone biosynthetic pathway. The polypeptide is Ubiquinone biosynthesis O-methyltransferase (Shigella flexneri serotype 5b (strain 8401)).